The following is a 177-amino-acid chain: ATP synthase subunit delta (177 aa).

The protein belongs to the ATPase delta chain family. F-type ATPases have 2 components, F(1) - the catalytic core - and F(0) - the membrane proton channel. F(1) has five subunits: alpha(3), beta(3), gamma(1), delta(1), epsilon(1). F(0) has three main subunits: a(1), b(2) and c(10-14). The alpha and beta chains form an alternating ring which encloses part of the gamma chain. F(1) is attached to F(0) by a central stalk formed by the gamma and epsilon chains, while a peripheral stalk is formed by the delta and b chains.

It localises to the cell inner membrane. Functionally, f(1)F(0) ATP synthase produces ATP from ADP in the presence of a proton or sodium gradient. F-type ATPases consist of two structural domains, F(1) containing the extramembraneous catalytic core and F(0) containing the membrane proton channel, linked together by a central stalk and a peripheral stalk. During catalysis, ATP synthesis in the catalytic domain of F(1) is coupled via a rotary mechanism of the central stalk subunits to proton translocation. In terms of biological role, this protein is part of the stalk that links CF(0) to CF(1). It either transmits conformational changes from CF(0) to CF(1) or is implicated in proton conduction. In Pasteurella multocida (strain Pm70), this protein is ATP synthase subunit delta.